The following is a 375-amino-acid chain: Succinyl-diaminopimelate desuccinylase (375 aa).

Histidine 66 contributes to the Zn(2+) binding site. Aspartate 68 is a catalytic residue. Residue aspartate 99 coordinates Zn(2+). Glutamate 133 functions as the Proton acceptor in the catalytic mechanism. Residues glutamate 134, glutamate 162, and histidine 348 each contribute to the Zn(2+) site.

This sequence belongs to the peptidase M20A family. DapE subfamily. As to quaternary structure, homodimer. It depends on Zn(2+) as a cofactor. Co(2+) serves as cofactor.

It carries out the reaction N-succinyl-(2S,6S)-2,6-diaminopimelate + H2O = (2S,6S)-2,6-diaminopimelate + succinate. It functions in the pathway amino-acid biosynthesis; L-lysine biosynthesis via DAP pathway; LL-2,6-diaminopimelate from (S)-tetrahydrodipicolinate (succinylase route): step 3/3. Catalyzes the hydrolysis of N-succinyl-L,L-diaminopimelic acid (SDAP), forming succinate and LL-2,6-diaminopimelate (DAP), an intermediate involved in the bacterial biosynthesis of lysine and meso-diaminopimelic acid, an essential component of bacterial cell walls. The sequence is that of Succinyl-diaminopimelate desuccinylase from Salmonella agona (strain SL483).